We begin with the raw amino-acid sequence, 514 residues long: F-box-like/WD repeat-containing protein TBL1XR1 (514 aa).

N-acetylserine is present on Ser-2. Positions 4 to 36 (SSDEVNFLVYRYLQESGFSHSAFTFGIESHISQ) constitute a LisH domain. Residues 41–86 (GALVPPAALISIIQKGLQYVEAEVSINEDGTLFDGRPIESLSLIDA) form the F-box-like domain. Lys-102 bears the N6-acetyllysine mark. At Ser-119 the chain carries Phosphoserine. Low complexity predominate over residues 120–135 (QQGSAKNGENTANGEE). Residues 120–139 (QQGSAKNGENTANGEENGAH) are disordered. 8 WD repeats span residues 167–206 (GHES…TSGS), 223–262 (PSNK…ASTL), 264–303 (QHKG…AKQQ), 306–344 (FHSA…PIKT), 347–386 (GHTN…CVHD), 389–437 (AHNK…CIHT), 440–479 (KHQE…LVHS), and 481–513 (RGTG…LDLR). Lys-277 is covalently cross-linked (Glycyl lysine isopeptide (Lys-Gly) (interchain with G-Cter in SUMO2)).

The protein belongs to the WD repeat EBI family. In terms of assembly, component of the N-Cor repressor complex, at least composed of NCOR1, NCOR2, HDAC3, TBL1X, TBL1XR1, CORO2A and GPS2. Probable component of some E3 ubiquitin ligase complex. Interacts with histones H2B and H4. Interacts with MECP2; bridges interaction between MECP2 and NCOR1. Interacts with USP44. As to expression, widely expressed including the pituitary, hypothalamus, white and brown adipose tissue, muscle and liver.

It localises to the nucleus. In terms of biological role, F-box-like protein involved in the recruitment of the ubiquitin/19S proteasome complex to nuclear receptor-regulated transcription units. Plays an essential role in transcription activation mediated by nuclear receptors. Probably acts as integral component of the N-Cor corepressor complex that mediates the recruitment of the 19S proteasome complex, leading to the subsequent proteasomal degradation of N-Cor complex, thereby allowing cofactor exchange, and transcription activation. This Homo sapiens (Human) protein is F-box-like/WD repeat-containing protein TBL1XR1 (TBL1XR1).